We begin with the raw amino-acid sequence, 216 residues long: Uracil phosphoribosyltransferase (216 aa).

Residues arginine 85, arginine 110, and 135 to 143 (DPMVATGYS) each bind 5-phospho-alpha-D-ribose 1-diphosphate. Uracil contacts are provided by residues isoleucine 200 and 205–207 (GDA). Position 206 (aspartate 206) interacts with 5-phospho-alpha-D-ribose 1-diphosphate.

The protein belongs to the UPRTase family. Mg(2+) is required as a cofactor.

The enzyme catalyses UMP + diphosphate = 5-phospho-alpha-D-ribose 1-diphosphate + uracil. The protein operates within pyrimidine metabolism; UMP biosynthesis via salvage pathway; UMP from uracil: step 1/1. Allosterically activated by GTP. Its function is as follows. Catalyzes the conversion of uracil and 5-phospho-alpha-D-ribose 1-diphosphate (PRPP) to UMP and diphosphate. This Burkholderia ambifaria (strain MC40-6) protein is Uracil phosphoribosyltransferase.